Here is a 387-residue protein sequence, read N- to C-terminus: S-adenosylmethionine synthase (387 aa).

Glu-8 serves as a coordination point for Mg(2+). ATP is bound at residue His-14. Position 42 (Glu-42) interacts with K(+). The L-methionine site is built by Glu-55 and Gln-98. Residues 166-168 (DGK), 234-237 (SGRF), Asp-245, 251-252 (RK), Ala-268, Lys-272, and Lys-276 contribute to the ATP site. An L-methionine-binding site is contributed by Asp-245. Lys-276 contributes to the L-methionine binding site.

Belongs to the AdoMet synthase family. As to quaternary structure, homotetramer. Requires Mn(2+) as cofactor. Mg(2+) serves as cofactor. It depends on Co(2+) as a cofactor. The cofactor is K(+).

It is found in the cytoplasm. The catalysed reaction is L-methionine + ATP + H2O = S-adenosyl-L-methionine + phosphate + diphosphate. It participates in amino-acid biosynthesis; S-adenosyl-L-methionine biosynthesis; S-adenosyl-L-methionine from L-methionine: step 1/1. Functionally, catalyzes the formation of S-adenosylmethionine from methionine and ATP. The reaction comprises two steps that are both catalyzed by the same enzyme: formation of S-adenosylmethionine (AdoMet) and triphosphate, and subsequent hydrolysis of the triphosphate. This Ostreococcus lucimarinus (strain CCE9901) protein is S-adenosylmethionine synthase (METK-1).